The sequence spans 446 residues: MIESCFNVGIWATGLALLMNQGQSPLLSNVGLSVLAYKATAMFIPRVGPSFIKRGFSGKDMNKVEKYVIPETMGAVSALVYFMCMIIFIPVLFYKYLVPNHNPNLPSDGSVAEVAKSQFPHDLLGAYLSALLSILSVSLLGILDDLFDIRWRHKFFLPAIAAIPLLVVYYVDYGVTYVSVPSIVRPFLKRSLINLGFLYYFYMAAVAIFCPNSINIIAGVNGVEAGQSLVLALVIACNDLFYVLSPKNKDALRAHLLSLYLVLPLIGVTAGLLKYNWWPSRVFVGDTFCYFAGMVMAVVGILGHFSKTLMLFFIPQIFNFALSVPQLFGLVECPRHRLPKLNVKTGLLENSYTEFSLNEHPLPKKTLLTISIFEKLRLIRVEYDPSTGRPLRCTNFTIINFVLYHLGPMREDHLTICIMGLQLLTGIFGLIIRHFVAPLVYPEDNI.

2 consecutive transmembrane segments (helical) span residues 1-21 (MIESCFNVGIWATGLALLMNQ) and 25-45 (PLLSNVGLSVLAYKATAMFIP). UDP-N-acetyl-alpha-D-glucosamine contacts are provided by residues 59 to 61 (KDM) and glutamate 71. 2 consecutive transmembrane segments (helical) span residues 73–93 (MGAVSALVYFMCMIIFIPVLF) and 123–143 (LLGAYLSALLSILSVSLLGIL). Lysine 154 contacts dolichyl phosphate. 2 consecutive transmembrane segments (helical) span residues 155–175 (FFLPAIAAIPLLVVYYVDYGV) and 191–211 (SLINLGFLYYFYMAAVAIFCP). 208-216 (IFCPNSINI) serves as a coordination point for dolichyl phosphate. A Mg(2+)-binding site is contributed by asparagine 215. Transmembrane regions (helical) follow at residues 216–236 (IIAGVNGVEAGQSLVLALVIA), 254–274 (AHLLSLYLVLPLIGVTAGLLK), 282–302 (VFVGDTFCYFAGMVMAVVGIL), and 311–331 (LFFIPQIFNFALSVPQLFGLV). Asparagine 221 serves as a coordination point for UDP-N-acetyl-alpha-D-glucosamine. Mg(2+) is bound at residue aspartate 286. 335–337 (RHR) contributes to the UDP-N-acetyl-alpha-D-glucosamine binding site. Asparagine 395 carries N-linked (GlcNAc...) asparagine glycosylation. The helical transmembrane segment at 412-432 (DHLTICIMGLQLLTGIFGLII) threads the bilayer.

This sequence belongs to the glycosyltransferase 4 family. Requires Mg(2+) as cofactor.

The protein resides in the endoplasmic reticulum membrane. The enzyme catalyses a di-trans,poly-cis-dolichyl phosphate + UDP-N-acetyl-alpha-D-glucosamine = an N-acetyl-alpha-D-glucosaminyl-diphospho-di-trans,poly-cis-dolichol + UMP. Its pathway is protein modification; protein glycosylation. With respect to regulation, inhibited by natural nucleoside antibiotic tunicamycin, which acts as a structural analog and competitor of UDP-GlcNAc. Its function is as follows. UDP-N-acetylglucosamine--dolichyl-phosphate N-acetylglucosaminephosphotransferase that operates in the biosynthetic pathway of dolichol-linked oligosaccharides, the glycan precursors employed in protein asparagine (N)-glycosylation. The assembly of dolichol-linked oligosaccharides begins on the cytosolic side of the endoplasmic reticulum membrane and finishes in its lumen. The sequential addition of sugars to dolichol pyrophosphate produces dolichol-linked oligosaccharides containing fourteen sugars, including two GlcNAcs, nine mannoses and three glucoses. Once assembled, the oligosaccharide is transferred from the lipid to nascent proteins by oligosaccharyltransferases. Catalyzes the initial step of dolichol-linked oligosaccharide biosynthesis, transfering GlcNAc-1-P from cytosolic UDP-GlcNAc onto the carrier lipid dolichyl phosphate (P-dolichol), yielding GlcNAc-P-P-dolichol embedded in the cytoplasmic leaflet of the endoplasmic reticulum membrane. In Schizosaccharomyces pombe (strain 972 / ATCC 24843) (Fission yeast), this protein is UDP-N-acetylglucosamine--dolichyl-phosphate N-acetylglucosaminephosphotransferase (gpt2).